Reading from the N-terminus, the 1671-residue chain is DENN domain-containing protein Crag (1671 aa).

The MABP domain maps to 39 to 195 (IEPITDIGVY…DVYLCYKKSM (157 aa)). The uDENN domain maps to 187-364 (VYLCYKKSMY…DEVPFPAPSI (178 aa)). The 137-residue stretch at 385–521 (PLPRSGAGFH…AARLLRQTLT (137 aa)) folds into the cDENN domain. The region spanning 523 to 632 (LENAKPISYD…ERSFVSDGDH (110 aa)) is the dDENN domain. Disordered regions lie at residues 997–1160 (QQQQ…PVAS), 1245–1311 (ANST…RLSE), and 1415–1435 (VEES…ANGN). 2 stretches are compositionally biased toward acidic residues: residues 1011 to 1023 (GDDD…EDEY) and 1050 to 1061 (YEADEEDEDEVD). The span at 1072–1089 (RVQSPTKISPRTPVTQND) shows a compositional bias: polar residues. Positions 1100 to 1119 (AASATPTQETQQEQQHSQSQ) are enriched in low complexity. Polar residues predominate over residues 1136–1147 (RSATFDESTQIG). Positions 1254–1277 (NGHHPHGLHHGHHHPHHHHHHHSQ) are enriched in basic residues. The segment covering 1281-1301 (AEQEEHDAAVHEEGKLRRVSS) has biased composition (basic and acidic residues).

As to quaternary structure, interacts with Cam. Interacts with Rab10. Interacts (via the DENN domains) with Rab11. In terms of tissue distribution, expressed in the adult head and body.

Its subcellular location is the cytoplasm. It localises to the cell cortex. It is found in the early endosome. The protein localises to the recycling endosome. The protein resides in the cytoplasmic granule. Its function is as follows. Calmodulin-binding protein that acts as a guanine exchange factor for Rab10 and Rab11. Essential for maintenance of adult photoreceptor cells. Upon light stimulation, required for trafficking of newly synthesized ninaE (Rh1) from the trans-Golgi network to rhabdomere membranes via Rab11-dependent vesicular transport. During egg development, essential for establishing and maintaining epithelial cell polarity by regulating the correct polarized deposition of basal membrane (BM) proteins in follicular epithelial (FE) cells. Functions by targeting Rab10 to the basal cytoplasm, where it restricts the secretion of BM proteins such as trol/Pcan and vkg/Coll IV to the basal surface. Appears to be involved in regulating the levels and distribution of the guanine nucleotide exchange factor strat, however the two proteins appear to have independent roles in regulating polarized BM protein secretion in the FE. The polypeptide is DENN domain-containing protein Crag (Drosophila melanogaster (Fruit fly)).